Reading from the N-terminus, the 71-residue chain is Biotinylated protein TB7.3 (71 aa).

Residues 2–71 (AEDVRAEIVA…QAGDLIAVIS (70 aa)) enclose the Biotinyl-binding domain. Lys37 carries the post-translational modification N6-biotinyllysine.

In Mycobacterium bovis (strain ATCC BAA-935 / AF2122/97), this protein is Biotinylated protein TB7.3.